The sequence spans 421 residues: Tryptophan synthase beta chain (421 aa).

K110 bears the N6-(pyridoxal phosphate)lysine mark.

Belongs to the TrpB family. Tetramer of two alpha and two beta chains. Pyridoxal 5'-phosphate is required as a cofactor.

It catalyses the reaction (1S,2R)-1-C-(indol-3-yl)glycerol 3-phosphate + L-serine = D-glyceraldehyde 3-phosphate + L-tryptophan + H2O. It participates in amino-acid biosynthesis; L-tryptophan biosynthesis; L-tryptophan from chorismate: step 5/5. Its function is as follows. The beta subunit is responsible for the synthesis of L-tryptophan from indole and L-serine. This Mycobacterium intracellulare protein is Tryptophan synthase beta chain (trpB).